The primary structure comprises 166 residues: MTDTSAAGNPTPGQQPANPPSLRVLGQYVKDLSFENPGHPPVQTQPNIDLGIDVGASPHADGNGLFEVSLKLSAKASAGDTVLFISELDYAGLFQLQNVPEGQVEAMLLIECPRLLFPFARRIIAEITREGGFPPLLIDPVDFVALYQSQYRRAAERAQNGNGGAS.

Residues 1–16 (MTDTSAAGNPTPGQQP) are compositionally biased toward polar residues. Residues 1–21 (MTDTSAAGNPTPGQQPANPPS) form a disordered region.

The protein belongs to the SecB family. As to quaternary structure, homotetramer, a dimer of dimers. One homotetramer interacts with 1 SecA dimer.

Its subcellular location is the cytoplasm. Its function is as follows. One of the proteins required for the normal export of preproteins out of the cell cytoplasm. It is a molecular chaperone that binds to a subset of precursor proteins, maintaining them in a translocation-competent state. It also specifically binds to its receptor SecA. This chain is Protein-export protein SecB, found in Hyphomonas neptunium (strain ATCC 15444).